Consider the following 267-residue polypeptide: Phosphatidylglycerol--prolipoprotein diacylglyceryl transferase (267 aa).

3 helical membrane passes run 18-38 (LSVR…MWFA), 57-77 (FLFY…VLFY), and 95-115 (GGMS…IFAW). Arg140 provides a ligand contact to a 1,2-diacyl-sn-glycero-3-phospho-(1'-sn-glycerol). The next 3 helical transmembrane spans lie at 173 to 193 (SQLY…QWFI), 200 to 220 (GSVA…IEYF), and 233 to 253 (FISM…GLLI).

This sequence belongs to the Lgt family.

It is found in the cell inner membrane. The catalysed reaction is L-cysteinyl-[prolipoprotein] + a 1,2-diacyl-sn-glycero-3-phospho-(1'-sn-glycerol) = an S-1,2-diacyl-sn-glyceryl-L-cysteinyl-[prolipoprotein] + sn-glycerol 1-phosphate + H(+). It functions in the pathway protein modification; lipoprotein biosynthesis (diacylglyceryl transfer). Catalyzes the transfer of the diacylglyceryl group from phosphatidylglycerol to the sulfhydryl group of the N-terminal cysteine of a prolipoprotein, the first step in the formation of mature lipoproteins. This is Phosphatidylglycerol--prolipoprotein diacylglyceryl transferase from Pseudoalteromonas translucida (strain TAC 125).